The primary structure comprises 1161 residues: DNA-directed RNA polymerase subunit beta (1161 aa).

It belongs to the RNA polymerase beta chain family. In terms of assembly, the RNAP catalytic core consists of 2 alpha, 1 beta, 1 beta' and 1 omega subunit. When a sigma factor is associated with the core the holoenzyme is formed, which can initiate transcription.

It carries out the reaction RNA(n) + a ribonucleoside 5'-triphosphate = RNA(n+1) + diphosphate. Its function is as follows. DNA-dependent RNA polymerase catalyzes the transcription of DNA into RNA using the four ribonucleoside triphosphates as substrates. This is DNA-directed RNA polymerase subunit beta from Streptomyces avermitilis (strain ATCC 31267 / DSM 46492 / JCM 5070 / NBRC 14893 / NCIMB 12804 / NRRL 8165 / MA-4680).